A 314-amino-acid polypeptide reads, in one-letter code: Ribonuclease Z (314 aa).

Zn(2+) contacts are provided by His62, His64, Asp66, His67, His139, Asp210, and His268. Asp66 (proton acceptor) is an active-site residue.

Belongs to the RNase Z family. Homodimer. It depends on Zn(2+) as a cofactor.

It catalyses the reaction Endonucleolytic cleavage of RNA, removing extra 3' nucleotides from tRNA precursor, generating 3' termini of tRNAs. A 3'-hydroxy group is left at the tRNA terminus and a 5'-phosphoryl group is left at the trailer molecule.. Zinc phosphodiesterase, which displays some tRNA 3'-processing endonuclease activity. Probably involved in tRNA maturation, by removing a 3'-trailer from precursor tRNA. The protein is Ribonuclease Z of Acaryochloris marina (strain MBIC 11017).